The chain runs to 44 residues: Cytochrome b559 subunit beta (44 aa).

Residues Trp19 to Ala35 traverse the membrane as a helical segment. His23 serves as a coordination point for heme.

Belongs to the PsbE/PsbF family. In terms of assembly, heterodimer of an alpha subunit and a beta subunit. PSII is composed of 1 copy each of membrane proteins PsbA, PsbB, PsbC, PsbD, PsbE, PsbF, PsbH, PsbI, PsbJ, PsbK, PsbL, PsbM, PsbT, PsbX, PsbY, PsbZ, Psb30/Ycf12, at least 3 peripheral proteins of the oxygen-evolving complex and a large number of cofactors. It forms dimeric complexes. It depends on heme b as a cofactor.

The protein localises to the plastid. Its subcellular location is the chloroplast thylakoid membrane. This b-type cytochrome is tightly associated with the reaction center of photosystem II (PSII). PSII is a light-driven water:plastoquinone oxidoreductase that uses light energy to abstract electrons from H(2)O, generating O(2) and a proton gradient subsequently used for ATP formation. It consists of a core antenna complex that captures photons, and an electron transfer chain that converts photonic excitation into a charge separation. This Gracilaria tenuistipitata var. liui (Red alga) protein is Cytochrome b559 subunit beta.